The primary structure comprises 160 residues: Globin CTT-Y (160 aa).

The N-terminal stretch at 1–16 (MKVLAIFALCIIGALA) is a signal peptide. The Globin domain maps to 17–160 (TPCDDFKIMQ…IRKVINANLE (144 aa)). 2 residues coordinate heme b: His-74 and His-109.

It belongs to the globin family.

The protein is Globin CTT-Y (CTT-Y) of Chironomus thummi piger (Midge).